The chain runs to 488 residues: Coagulation factor X (488 aa).

The N-terminal stretch at 1-31 (MGRPLHLVLLSASLAGLLLLGESLFIRREQA) is a signal peptide. A propeptide spanning residues 32-40 (NNILARVTR) is cleaved from the precursor. In terms of domain architecture, Gla spans 41–85 (ANSFLEEMKKGHLERECMEETCSYEEAREVFEDSDKTNEFWNKYK). Glu46, Glu47, Glu54, Glu56, Glu59, Glu60, Glu65, Glu66, Glu69, Glu72, and Glu79 each carry 4-carboxyglutamate. Residues Cys57 and Cys62 are joined by a disulfide bond. One can recognise an EGF-like 1; calcium-binding domain in the interval 86 to 122 (DGDQCETSPCQNQGKCKDGLGEYTCTCLEGFEGKNCE). Intrachain disulfides connect Cys90/Cys101, Cys95/Cys110, Cys112/Cys121, Cys129/Cys140, Cys136/Cys149, Cys151/Cys164, Cys172/Cys342, Cys241/Cys246, Cys261/Cys277, Cys390/Cys404, and Cys415/Cys443. Asp103 carries the post-translational modification (3R)-3-hydroxyaspartate. The EGF-like 2 domain occupies 125–165 (TRKLCSLDNGDCDQFCHEEQNSVVCSCARGYTLADNGKACI). The O-glycosylated at one site stretch occupies residues 183-203 (SVAQATSSSGEAPDSITWKPY). The propeptide at 183-234 (SVAQATSSSGEAPDSITWKPYDAADLDPTENPFDLLDFNQTQPERGDNNLTR) is activation peptide. Thr199 and Thr211 each carry an O-linked (GalNAc...) threonine glycan. Asn221 and Asn231 each carry an N-linked (GlcNAc...) asparagine glycan. The Peptidase S1 domain occupies 235 to 467 (IVGGQECKDG…FLKWIDRSMK (233 aa)). Active-site charge relay system residues include His276 and Asp322. Ser419 (charge relay system) is an active-site residue. The O-glycosylated at one site stretch occupies residues 476–485 (SHAPEVITSS).

Belongs to the peptidase S1 family. In terms of assembly, the two chains are formed from a single-chain precursor by the excision of two Arg residues and are held together by 1 or more disulfide bonds. Forms a heterodimer with SERPINA5. Interacts (inactive and activated) with ixolaris, an anticoagulant protein from Ixodes scapularis saliva. Interacts (activated) with iripin-8, a serine protease inhibitor from Ixodes ricinus saliva. Interacts (activated) with FXa-directed anticoagulant from Aedes albopictus saliva. Interacts (activated) with guianensin, an anticoagulant protein from Simulium guianense saliva. Interacts (activated) with simukunin, an anticoagulant protein from Simulium vittatum saliva. Post-translationally, the vitamin K-dependent, enzymatic carboxylation of some glutamate residues allows the modified protein to bind calcium. In terms of processing, N- and O-glycosylated. O-glycosylated with core 1 or possibly core 8 glycans. Proteolytically cleaved and activated by cathepsin CTSG. The activation peptide is cleaved by factor IXa (in the intrinsic pathway), or by factor VIIa (in the extrinsic pathway). Post-translationally, the iron and 2-oxoglutarate dependent 3-hydroxylation of aspartate and asparagine is (R) stereospecific within EGF domains. As to expression, plasma; synthesized in the liver.

It localises to the secreted. It catalyses the reaction Selective cleavage of Arg-|-Thr and then Arg-|-Ile bonds in prothrombin to form thrombin.. Inhibited by SERPINA5 and SERPINA10. Functionally, factor Xa is a vitamin K-dependent glycoprotein that converts prothrombin to thrombin in the presence of factor Va, calcium and phospholipid during blood clotting. Factor Xa activates pro-inflammatory signaling pathways in a protease-activated receptor (PAR)-dependent manner. Up-regulates expression of protease-activated receptors (PARs) F2R, F2RL1 and F2RL2 in dermal microvascular endothelial cells. Triggers the production of pro-inflammatory cytokines, such as MCP-1/CCL2 and IL6, in cardiac fibroblasts and umbilical vein endothelial cells in PAR-1/F2R-dependent manner. Triggers the production of pro-inflammatory cytokines, such as MCP-1/CCL2, IL6, TNF-alpha/TNF, IL-1beta/IL1B, IL8/CXCL8 and IL18, in endothelial cells and atrial tissues. Induces expression of adhesion molecules, such as ICAM1, VCAM1 and SELE, in endothelial cells and atrial tissues. Increases expression of phosphorylated ERK1/2 in dermal microvascular endothelial cells and atrial tissues. Triggers activation of the transcription factor NF-kappa-B in dermal microvascular endothelial cells and atrial tissues. Activates pro-inflammatory and pro-fibrotic responses in dermal fibroblasts and enhances wound healing probably via PAR-2/F2RL1-dependent mechanism. Activates barrier protective signaling responses in endothelial cells in PAR-2/F2RL1-dependent manner; the activity depends on the cleavage of PAR-2/F2RL1 by factor Xa. Up-regulates expression of plasminogen activator inhibitor 1 (SERPINE1) in atrial tissues. This is Coagulation factor X (F10) from Homo sapiens (Human).